The sequence spans 1369 residues: DNA-directed RNA polymerase subunit beta' (1369 aa).

The disordered stretch occupies residues 1-43 (MTSSSPKTRKSSTKSKAKRGSKSKKAAEIKAVQRLSKTPPPFR). Residues 7–24 (KTRKSSTKSKAKRGSKSK) are compositionally biased toward basic residues. The Zn(2+) site is built by C253, C320, C327, and C330. A disordered region spans residues 1294 to 1369 (TVDMPSSPVA…LQEEGLLSDE (76 aa)). Acidic residues predominate over residues 1342 to 1351 (DDELSAEDQM). Positions 1357 to 1369 (LEGLQEEGLLSDE) are enriched in low complexity.

It belongs to the RNA polymerase beta' chain family. RpoC2 subfamily. In terms of assembly, in cyanobacteria the RNAP catalytic core is composed of 2 alpha, 1 beta, 1 beta', 1 gamma and 1 omega subunit. When a sigma factor is associated with the core the holoenzyme is formed, which can initiate transcription. It depends on Zn(2+) as a cofactor.

It catalyses the reaction RNA(n) + a ribonucleoside 5'-triphosphate = RNA(n+1) + diphosphate. Its function is as follows. DNA-dependent RNA polymerase catalyzes the transcription of DNA into RNA using the four ribonucleoside triphosphates as substrates. This chain is DNA-directed RNA polymerase subunit beta', found in Prochlorococcus marinus (strain NATL1A).